The sequence spans 650 residues: Acetyl-coenzyme A synthetase (650 aa).

Residues 191 to 194 (RGGR), Thr311, and Asn335 each bind CoA. ATP contacts are provided by residues 387 to 389 (GEP), 411 to 416 (DTWWQT), Asp500, and Arg515. Residue Ser523 coordinates CoA. Arg526 is a binding site for ATP. Positions 537, 539, and 542 each coordinate Mg(2+). Arg584 serves as a coordination point for CoA. Lys609 carries the post-translational modification N6-acetyllysine.

This sequence belongs to the ATP-dependent AMP-binding enzyme family. The cofactor is Mg(2+). Acetylated. Deacetylation by the SIR2-homolog deacetylase activates the enzyme.

It catalyses the reaction acetate + ATP + CoA = acetyl-CoA + AMP + diphosphate. Functionally, catalyzes the conversion of acetate into acetyl-CoA (AcCoA), an essential intermediate at the junction of anabolic and catabolic pathways. AcsA undergoes a two-step reaction. In the first half reaction, AcsA combines acetate with ATP to form acetyl-adenylate (AcAMP) intermediate. In the second half reaction, it can then transfer the acetyl group from AcAMP to the sulfhydryl group of CoA, forming the product AcCoA. This chain is Acetyl-coenzyme A synthetase, found in Shewanella sp. (strain ANA-3).